The primary structure comprises 147 residues: Large ribosomal subunit protein uL15 (147 aa).

Belongs to the universal ribosomal protein uL15 family. Part of the 50S ribosomal subunit.

Its function is as follows. Binds to the 23S rRNA. The chain is Large ribosomal subunit protein uL15 from Blochmanniella floridana.